The sequence spans 140 residues: ATP synthase epsilon chain (140 aa).

Belongs to the ATPase epsilon chain family. F-type ATPases have 2 components, CF(1) - the catalytic core - and CF(0) - the membrane proton channel. CF(1) has five subunits: alpha(3), beta(3), gamma(1), delta(1), epsilon(1). CF(0) has three main subunits: a, b and c.

It is found in the cell inner membrane. Its function is as follows. Produces ATP from ADP in the presence of a proton gradient across the membrane. The protein is ATP synthase epsilon chain of Legionella pneumophila (strain Lens).